Reading from the N-terminus, the 215-residue chain is Penicillin-binding protein activator LpoB (215 aa).

The signal sequence occupies residues 1–19 (MMKMCRYALITALAIFLAG). A lipid anchor (N-palmitoyl cysteine) is attached at Cys20. A lipid anchor (S-diacylglycerol cysteine) is attached at Cys20. Positions 28–78 (APVEEAKPQPQQPAQPQPTVPTVPAVPSVPAQPGPIEHQDQQSGQPAPRVR) are disordered. Positions 37–48 (PQQPAQPQPTVP) are enriched in pro residues. Positions 49-58 (TVPAVPSVPA) are enriched in low complexity.

The protein belongs to the LpoB family. Interacts with PBP1b.

The protein resides in the cell outer membrane. In terms of biological role, regulator of peptidoglycan synthesis that is essential for the function of penicillin-binding protein 1B (PBP1b). The protein is Penicillin-binding protein activator LpoB of Klebsiella pneumoniae subsp. pneumoniae (strain ATCC 700721 / MGH 78578).